A 1627-amino-acid polypeptide reads, in one-letter code: DNA topoisomerase 2-beta (1627 aa).

ATP is bound by residues N117, N146, 174-176 (SSN), and 187-194 (GRNGYGAK). The interaction with DNA stretch occupies residues 368–370 (KKK). ATP is bound at residue 402–404 (QTK). Residues 481–598 (CTLILTEGDS…SLLKHGFLEE (118 aa)) enclose the Toprim domain. Mg(2+) is bound by residues E487, D567, and D569. The region spanning 741 to 1194 (IPSLVDGLKP…SASDLWKEDL (454 aa)) is the Topo IIA-type catalytic domain. The O-(5'-phospho-DNA)-tyrosine intermediate role is filled by Y831. Residues 1016–1025 (KLQTSLTCNS) form an interaction with DNA region. Disordered stretches follow at residues 1115–1144 (AWKE…GSTS), 1224–1248 (KVGK…RRIV), 1283–1365 (EFGG…DSLL), and 1378–1627 (DFSK…DMFN). The span at 1131 to 1144 (NANDDASSASGSTS) shows a compositional bias: low complexity. Residues 1296–1305 (TVNTAASGTK) are compositionally biased toward polar residues. Residues 1339–1349 (PWSDDESKSES) show a composition bias toward basic and acidic residues. Acidic residues-rich tracts occupy residues 1381 to 1392 (KEEDDAHDDDDA) and 1412 to 1428 (REDE…DEYD). Basic and acidic residues-rich tracts occupy residues 1436–1448 (PSPE…KKNQ) and 1462–1471 (KTDDDTTKLD). 2 stretches are compositionally biased toward basic residues: residues 1542–1552 (GKGRGAKKRKT) and 1566–1578 (KAPK…KSKK). Over residues 1616–1627 (ESDEDDDFDMFN) the composition is skewed to acidic residues.

It belongs to the type II topoisomerase family. Homodimer. The cofactor is Mg(2+). Mn(2+) is required as a cofactor. It depends on Ca(2+) as a cofactor.

The protein resides in the nucleus. Its subcellular location is the nucleolus. The protein localises to the nucleoplasm. It carries out the reaction ATP-dependent breakage, passage and rejoining of double-stranded DNA.. Functionally, key decatenating enzyme that alters DNA topology by binding to two double-stranded DNA molecules, generating a double-stranded break in one of the strands, passing the intact strand through the broken strand, and religating the broken strand. Plays a role in B-cell differentiation. This Gallus gallus (Chicken) protein is DNA topoisomerase 2-beta (TOP2B).